We begin with the raw amino-acid sequence, 488 residues long: MSQSVESRTRIKSERYESGVIPYAKMGYWDADYVIKETDVLALFRITPQPGVDPIEASAAIAGESSTATWTVVWTDLLTACDLYRAKAYRVDPVPNVADQYFAYIAYDIDLFEEGSIANLTASIIGNVFGFKAVKALRLEDMRMPVAYLKTFQGPATGLIVERERMDKFGRPFLGATVKPKLGLSGKNYGRVVYEGLKGGLDFLKDDENINSQPFMRWKERFLYSMEGVNKASAAAGEIKGHYLNVTAATMEDMYERAEFSKEVGSIICMIDLVIGYTAIQTMAIWARKHDMILHLHRAGNSTYSRQKNHGMNFRVICKWMRMAGVDHIHAGTVVGKLEGDPLMIKGFYNTLLESETDINLPQGLFFAQNWASLRKVVPVASGGIHAGQMHQLLDYLGDDVVLQFGGGTIGHPDGIQAGATANRVALESMVMARNEGRNYVAEGPQILRDAAKTCGPLQTALDLWKDISFNYTSTDTADFVETPTANI.

Asparagine 127 and threonine 177 together coordinate substrate. Catalysis depends on lysine 179, which acts as the Proton acceptor. Lysine 181 is a binding site for substrate. Positions 205, 207, and 208 each coordinate Mg(2+). Position 205 is an N6-carboxylysine (lysine 205). Catalysis depends on histidine 297, which acts as the Proton acceptor. Residues arginine 298, histidine 330, and serine 382 each coordinate substrate.

This sequence belongs to the RuBisCO large chain family. Type I subfamily. Heterohexadecamer of 8 large chains and 8 small chains. Requires Mg(2+) as cofactor.

The protein localises to the plastid. The protein resides in the chloroplast. The enzyme catalyses 2 (2R)-3-phosphoglycerate + 2 H(+) = D-ribulose 1,5-bisphosphate + CO2 + H2O. The catalysed reaction is D-ribulose 1,5-bisphosphate + O2 = 2-phosphoglycolate + (2R)-3-phosphoglycerate + 2 H(+). In terms of biological role, ruBisCO catalyzes two reactions: the carboxylation of D-ribulose 1,5-bisphosphate, the primary event in carbon dioxide fixation, as well as the oxidative fragmentation of the pentose substrate in the photorespiration process. Both reactions occur simultaneously and in competition at the same active site. The chain is Ribulose bisphosphate carboxylase large chain (rbcL) from Pyropia haitanensis (Red seaweed).